The primary structure comprises 269 residues: Zinc transporter ZupT (269 aa).

The next 8 helical transmembrane spans lie at 12 to 32 (AFSI…LVMF), 41 to 61 (LSFG…TEIF), 75 to 95 (DHAF…IALI), 126 to 146 (MMAA…TFFA), 152 to 172 (AVGM…GISI), 187 to 207 (VWAC…GYLV), 211 to 231 (FLSP…MVFL), and 249 to 269 (TVYG…LFHF). Positions 136 and 139 each coordinate Fe(2+). The Zn(2+) site is built by glutamate 139 and histidine 164. Residues asparagine 165, glutamate 168, and glutamate 197 each coordinate Fe(2+). Residue glutamate 168 participates in Zn(2+) binding.

Belongs to the ZIP transporter (TC 2.A.5) family. ZupT subfamily.

Its subcellular location is the cell inner membrane. The catalysed reaction is Zn(2+)(in) = Zn(2+)(out). Its function is as follows. Mediates zinc uptake. May also transport other divalent cations. The protein is Zinc transporter ZupT of Neisseria meningitidis serogroup B (strain ATCC BAA-335 / MC58).